Consider the following 255-residue polypeptide: uncharacterized protein (255 aa).

Belongs to the methyltransferase superfamily.

This is an uncharacterized protein from Mycobacterium ulcerans (strain Agy99).